A 751-amino-acid chain; its full sequence is MYQVSLKQFVFLLKIKSTTMEPHRKHSVGDTTLHTCHPCRRTIPYRIYAVFHTCGIIALMYHHVHSLLTANTTLITSLLLLSDIVLAFMWATTTSLRYKPVRRTEYPEKYAAEPEDFPKLDVFICTADPYKEPPMMVVNTALSVMAYEYPSDKISVYVSDDGGSSLTLFALMEAAKFSKHWLPFCKKNNVQDRSPEVYFSSKLRSRSDEAENIKMMYEDMKSRVEHVVESGKVETAFITCDQFRGVFDLWTDKFTRHDHPTIIQVLQNSENDMDDTKKYIMPNLIYVSREKSKVSSHHFKAGALNTLLRVSGVMTNSPIILTLDCDMYSNDPATPVRALCYLTDPKIKTGLGFVQFPQTFQGISKNDIYACAYKRLFEINMIGFDGLMGPNHVGTGCFFNRRGFYGAPSNLILPEIDELKPNRIVDKPINAQDVLALAHRVAGCIYELNTNWGSKIGFRYGSLVEDYYTGYRLHCEGWRSVFCRPKRAAFCGDSPKSLIDVVSQQKRWAIGLLEVAISRYSPITYGVKSMGLVTGVGYCQYACWAFWSLPLIVYGFLPQLALLYQSSVFPKSSDPWFWLYIVLFLGAYGQDLLDFVLEGGTYGGWWNDQRMWSIRGFSSHLFGFIEFTLKTLNLSTHGFNVTSKANDDEEQSKRYEKEIFEFGPSSSMFLPLTTVAIVNLLAFVWGLYGLFAWGEGLVLELMLASFAVVNCLPIYEAMVLRIDDGKLPKRVCFVAGILTFVLIVSGYVFLK.

Helical transmembrane passes span 47-67 (IYAV…VHSL) and 72-92 (TTLI…MWAT). Active-site residues include Asp-161 and Asp-466. The next 6 helical transmembrane spans lie at 543-563 (CWAF…LALL), 577-597 (FWLY…DFVL), 617-639 (FSSH…THGF), 674-694 (TVAI…FAWG), 697-717 (LVLE…IYEA), and 731-751 (VCFV…VFLK).

Belongs to the glycosyltransferase 2 family. Plant cellulose synthase-like G subfamily.

The protein resides in the golgi apparatus membrane. Its function is as follows. Thought to be a Golgi-localized beta-glycan synthase that polymerize the backbones of noncellulosic polysaccharides (hemicelluloses) of plant cell wall. This chain is Cellulose synthase-like protein G3 (CSLG3), found in Arabidopsis thaliana (Mouse-ear cress).